The primary structure comprises 332 residues: Glycerol-3-phosphate dehydrogenase [NAD(P)+] (332 aa).

Residues S11, W12, R32, R33, and K106 each coordinate NADPH. Sn-glycerol 3-phosphate contacts are provided by K106 and G136. Residue A140 participates in NADPH binding. Residues K191, D244, S254, R255, and N256 each contribute to the sn-glycerol 3-phosphate site. K191 acts as the Proton acceptor in catalysis. Residue R255 participates in NADPH binding. Positions 280 and 282 each coordinate NADPH.

This sequence belongs to the NAD-dependent glycerol-3-phosphate dehydrogenase family.

Its subcellular location is the cytoplasm. It catalyses the reaction sn-glycerol 3-phosphate + NAD(+) = dihydroxyacetone phosphate + NADH + H(+). It carries out the reaction sn-glycerol 3-phosphate + NADP(+) = dihydroxyacetone phosphate + NADPH + H(+). It functions in the pathway membrane lipid metabolism; glycerophospholipid metabolism. Catalyzes the reduction of the glycolytic intermediate dihydroxyacetone phosphate (DHAP) to sn-glycerol 3-phosphate (G3P), the key precursor for phospholipid synthesis. This Corynebacterium urealyticum (strain ATCC 43042 / DSM 7109) protein is Glycerol-3-phosphate dehydrogenase [NAD(P)+].